We begin with the raw amino-acid sequence, 282 residues long: 4-diphosphocytidyl-2-C-methyl-D-erythritol kinase (282 aa).

Lys12 is a catalytic residue. Position 95-105 (95-105 (PMGGGIGGGSS)) interacts with ATP. Asp137 is an active-site residue.

The protein belongs to the GHMP kinase family. IspE subfamily.

The enzyme catalyses 4-CDP-2-C-methyl-D-erythritol + ATP = 4-CDP-2-C-methyl-D-erythritol 2-phosphate + ADP + H(+). It participates in isoprenoid biosynthesis; isopentenyl diphosphate biosynthesis via DXP pathway; isopentenyl diphosphate from 1-deoxy-D-xylulose 5-phosphate: step 3/6. Functionally, catalyzes the phosphorylation of the position 2 hydroxy group of 4-diphosphocytidyl-2C-methyl-D-erythritol. This Pseudomonas aeruginosa (strain LESB58) protein is 4-diphosphocytidyl-2-C-methyl-D-erythritol kinase.